The primary structure comprises 315 residues: Aspartate carbamoyltransferase catalytic subunit (315 aa).

Arginine 64 and threonine 65 together coordinate carbamoyl phosphate. Lysine 93 provides a ligand contact to L-aspartate. Carbamoyl phosphate-binding residues include arginine 114, histidine 142, and glutamine 145. Arginine 175 and arginine 237 together coordinate L-aspartate. Residues leucine 276 and proline 277 each contribute to the carbamoyl phosphate site.

The protein belongs to the aspartate/ornithine carbamoyltransferase superfamily. ATCase family. In terms of assembly, heterooligomer of catalytic and regulatory chains.

The enzyme catalyses carbamoyl phosphate + L-aspartate = N-carbamoyl-L-aspartate + phosphate + H(+). It participates in pyrimidine metabolism; UMP biosynthesis via de novo pathway; (S)-dihydroorotate from bicarbonate: step 2/3. Functionally, catalyzes the condensation of carbamoyl phosphate and aspartate to form carbamoyl aspartate and inorganic phosphate, the committed step in the de novo pyrimidine nucleotide biosynthesis pathway. The sequence is that of Aspartate carbamoyltransferase catalytic subunit from Thermofilum pendens (strain DSM 2475 / Hrk 5).